Reading from the N-terminus, the 1127-residue chain is Cellulose synthase-like protein D1 (1127 aa).

The segment at 1 to 24 (MASKGILKNGGKPPTAPSSAAPTV) is disordered. Helical transmembrane passes span 262–282 (VISP…LFLM) and 292–312 (AIWL…SWVL). Active-site residues include Asp392 and Asp828. Helical transmembrane passes span 910–930 (VFLI…QFIV), 936–956 (TFLT…MLEI), 982–1002 (LAAV…SFTL), 1025–1045 (SLMI…AVGF), 1059–1079 (LLGG…FAKG), and 1089–1109 (TIVY…WIAI).

This sequence belongs to the glycosyltransferase 2 family. Plant cellulose synthase-like D subfamily.

It localises to the golgi apparatus membrane. Thought to be a Golgi-localized beta-glycan synthase that polymerize the backbones of noncellulosic polysaccharides (hemicelluloses) of plant cell wall. In Oryza sativa subsp. indica (Rice), this protein is Cellulose synthase-like protein D1 (CSLD1).